A 184-amino-acid chain; its full sequence is Large ribosomal subunit protein uL6 (184 aa).

Belongs to the universal ribosomal protein uL6 family. As to quaternary structure, part of the 50S ribosomal subunit.

Its function is as follows. This protein binds to the 23S rRNA, and is important in its secondary structure. It is located near the subunit interface in the base of the L7/L12 stalk, and near the tRNA binding site of the peptidyltransferase center. The protein is Large ribosomal subunit protein uL6 of Onion yellows phytoplasma (strain OY-M).